Here is a 263-residue protein sequence, read N- to C-terminus: Diphthine synthase (263 aa).

Residues leucine 11, aspartate 89, alanine 92, 117 to 118 (SV), leucine 166, and leucine 208 contribute to the S-adenosyl-L-methionine site.

This sequence belongs to the diphthine synthase family. Homodimer.

It catalyses the reaction 2-[(3S)-amino-3-carboxypropyl]-L-histidyl-[translation elongation factor 2] + 3 S-adenosyl-L-methionine = diphthine-[translation elongation factor 2] + 3 S-adenosyl-L-homocysteine + 3 H(+). It participates in protein modification; peptidyl-diphthamide biosynthesis. Its function is as follows. S-adenosyl-L-methionine-dependent methyltransferase that catalyzes the trimethylation of the amino group of the modified target histidine residue in translation elongation factor 2 (EF-2), to form an intermediate called diphthine. The three successive methylation reactions represent the second step of diphthamide biosynthesis. In Methanopyrus kandleri (strain AV19 / DSM 6324 / JCM 9639 / NBRC 100938), this protein is Diphthine synthase.